Reading from the N-terminus, the 359-residue chain is Elongation factor Ts 1, mitochondrial (359 aa).

The span at 323-341 (GKAAPAPKAEEPAAVAPAK) shows a compositional bias: low complexity. A disordered region spans residues 323-345 (GKAAPAPKAEEPAAVAPAKADAE).

Belongs to the EF-Ts family.

Its subcellular location is the mitochondrion. Functionally, associates with the EF-Tu.GDP complex and induces the exchange of GDP to GTP. It remains bound to the aminoacyl-tRNA.EF-Tu.GTP complex up to the GTP hydrolysis stage on the ribosome. This Thalassiosira pseudonana (Marine diatom) protein is Elongation factor Ts 1, mitochondrial.